Reading from the N-terminus, the 398-residue chain is Acetate kinase (398 aa).

Asn-9 lines the Mg(2+) pocket. Lys-16 is a binding site for ATP. Position 93 (Arg-93) interacts with substrate. Catalysis depends on Asp-150, which acts as the Proton donor/acceptor. Residues 209–213 (HLGAG), 284–286 (DMR), and 329–333 (GIGEH) contribute to the ATP site. Glu-382 serves as a coordination point for Mg(2+).

It belongs to the acetokinase family. In terms of assembly, homodimer. Requires Mg(2+) as cofactor. It depends on Mn(2+) as a cofactor.

Its subcellular location is the cytoplasm. It carries out the reaction acetate + ATP = acetyl phosphate + ADP. Its pathway is metabolic intermediate biosynthesis; acetyl-CoA biosynthesis; acetyl-CoA from acetate: step 1/2. In terms of biological role, catalyzes the formation of acetyl phosphate from acetate and ATP. Can also catalyze the reverse reaction. In Rhodopseudomonas palustris (strain ATCC BAA-98 / CGA009), this protein is Acetate kinase.